A 513-amino-acid chain; its full sequence is Maturase K (513 aa).

Belongs to the intron maturase 2 family. MatK subfamily.

It is found in the plastid. It localises to the chloroplast. Its function is as follows. Usually encoded in the trnK tRNA gene intron. Probably assists in splicing its own and other chloroplast group II introns. This Saccharum officinarum (Sugarcane) protein is Maturase K.